We begin with the raw amino-acid sequence, 351 residues long: Putative NBPF family member NBPF5 (351 aa).

Coiled-coil stretches lie at residues S10–L43 and D69–E115. The tract at residues H157–N285 is disordered. Over residues E165 to E179 the composition is skewed to acidic residues. The region spanning E174 to P261 is the Olduvai domain. Basic and acidic residues predominate over residues E192 to P202. Low complexity predominate over residues S214 to H226. 2 stretches are compositionally biased toward basic and acidic residues: residues T232–D251 and Q264–K273.

This sequence belongs to the NBPF family. Expressed in brain and medulla.

The protein localises to the cytoplasm. The protein is Putative NBPF family member NBPF5 of Homo sapiens (Human).